Here is a 433-residue protein sequence, read N- to C-terminus: UDP-N-acetylglucosamine 1-carboxyvinyltransferase (433 aa).

A phosphoenolpyruvate-binding site is contributed by 34–35; that stretch reads KN. Arg-104 contributes to the UDP-N-acetyl-alpha-D-glucosamine binding site. Cys-128 acts as the Proton donor in catalysis. Cys-128 is modified (2-(S-cysteinyl)pyruvic acid O-phosphothioketal). Asp-320 and Ile-342 together coordinate UDP-N-acetyl-alpha-D-glucosamine.

Belongs to the EPSP synthase family. MurA subfamily.

Its subcellular location is the cytoplasm. It carries out the reaction phosphoenolpyruvate + UDP-N-acetyl-alpha-D-glucosamine = UDP-N-acetyl-3-O-(1-carboxyvinyl)-alpha-D-glucosamine + phosphate. It participates in cell wall biogenesis; peptidoglycan biosynthesis. In terms of biological role, cell wall formation. Adds enolpyruvyl to UDP-N-acetylglucosamine. The polypeptide is UDP-N-acetylglucosamine 1-carboxyvinyltransferase (Parasynechococcus marenigrum (strain WH8102)).